Consider the following 233-residue polypeptide: Enolase-phosphatase E1 (233 aa).

Mg(2+) is bound by residues Asp16 and Glu18. Residues Ser131–Ser132 and Lys167 contribute to the substrate site. Asp193 is a binding site for Mg(2+).

This sequence belongs to the HAD-like hydrolase superfamily. MasA/MtnC family. In terms of assembly, monomer. It depends on Mg(2+) as a cofactor.

It is found in the cytoplasm. The protein resides in the nucleus. It catalyses the reaction 5-methylsulfanyl-2,3-dioxopentyl phosphate + H2O = 1,2-dihydroxy-5-(methylsulfanyl)pent-1-en-3-one + phosphate. It functions in the pathway amino-acid biosynthesis; L-methionine biosynthesis via salvage pathway; L-methionine from S-methyl-5-thio-alpha-D-ribose 1-phosphate: step 3/6. Its pathway is amino-acid biosynthesis; L-methionine biosynthesis via salvage pathway; L-methionine from S-methyl-5-thio-alpha-D-ribose 1-phosphate: step 4/6. Functionally, bifunctional enzyme that catalyzes the enolization of 2,3-diketo-5-methylthiopentyl-1-phosphate (DK-MTP-1-P) into the intermediate 2-hydroxy-3-keto-5-methylthiopentenyl-1-phosphate (HK-MTPenyl-1-P), which is then dephosphorylated to form the acireductone 1,2-dihydroxy-3-keto-5-methylthiopentene (DHK-MTPene). The polypeptide is Enolase-phosphatase E1 (Meyerozyma guilliermondii (strain ATCC 6260 / CBS 566 / DSM 6381 / JCM 1539 / NBRC 10279 / NRRL Y-324) (Yeast)).